Reading from the N-terminus, the 149-residue chain is Cyanate hydratase (149 aa).

Catalysis depends on residues R90, E93, and S116.

It belongs to the cyanase family.

The enzyme catalyses cyanate + hydrogencarbonate + 3 H(+) = NH4(+) + 2 CO2. Its function is as follows. Catalyzes the reaction of cyanate with bicarbonate to produce ammonia and carbon dioxide. The chain is Cyanate hydratase from Aquifex aeolicus (strain VF5).